The sequence spans 570 residues: Urease subunit alpha (570 aa).

Residues 133–570 (GGIDNHIHYI…LPLAQLYNLF (438 aa)) form the Urease domain. Ni(2+) is bound by residues His138, His140, and Lys221. Lys221 carries the N6-carboxylysine modification. His223 contributes to the substrate binding site. Ni(2+)-binding residues include His250 and His276. The active-site Proton donor is His324. Asp364 contributes to the Ni(2+) binding site.

The protein belongs to the metallo-dependent hydrolases superfamily. Urease alpha subunit family. Heterotrimer of UreA (gamma), UreB (beta) and UreC (alpha) subunits. Three heterotrimers associate to form the active enzyme. Ni cation serves as cofactor. Post-translationally, carboxylation allows a single lysine to coordinate two nickel ions.

It localises to the cytoplasm. The enzyme catalyses urea + 2 H2O + H(+) = hydrogencarbonate + 2 NH4(+). The protein operates within nitrogen metabolism; urea degradation; CO(2) and NH(3) from urea (urease route): step 1/1. The sequence is that of Urease subunit alpha from Cytophaga hutchinsonii (strain ATCC 33406 / DSM 1761 / CIP 103989 / NBRC 15051 / NCIMB 9469 / D465).